The chain runs to 322 residues: Acetyl-coenzyme A carboxylase carboxyl transferase subunit alpha (322 aa).

The CoA carboxyltransferase C-terminal domain occupies 40 to 297; that stretch reads PLQKKLGDLR…RETLTRNLEE (258 aa).

It belongs to the AccA family. Acetyl-CoA carboxylase is a heterohexamer composed of biotin carboxyl carrier protein (AccB), biotin carboxylase (AccC) and two subunits each of ACCase subunit alpha (AccA) and ACCase subunit beta (AccD).

The protein resides in the cytoplasm. It carries out the reaction N(6)-carboxybiotinyl-L-lysyl-[protein] + acetyl-CoA = N(6)-biotinyl-L-lysyl-[protein] + malonyl-CoA. Its pathway is lipid metabolism; malonyl-CoA biosynthesis; malonyl-CoA from acetyl-CoA: step 1/1. Functionally, component of the acetyl coenzyme A carboxylase (ACC) complex. First, biotin carboxylase catalyzes the carboxylation of biotin on its carrier protein (BCCP) and then the CO(2) group is transferred by the carboxyltransferase to acetyl-CoA to form malonyl-CoA. The polypeptide is Acetyl-coenzyme A carboxylase carboxyl transferase subunit alpha (Gemmatimonas aurantiaca (strain DSM 14586 / JCM 11422 / NBRC 100505 / T-27)).